We begin with the raw amino-acid sequence, 150 residues long: Large ribosomal subunit protein uL15 (150 aa).

Residues 1 to 57 (MTIKLESLQSNKGSRRKKMRKGRGIAAGQGASCGFGMRGQKSRSGRPTRPGFEGGQM) form a disordered region. Residues 13–23 (GSRRKKMRKGR) show a composition bias toward basic residues. A compositionally biased stretch (gly residues) spans 25–37 (IAAGQGASCGFGM).

Belongs to the universal ribosomal protein uL15 family. In terms of assembly, part of the 50S ribosomal subunit.

Functionally, binds to the 23S rRNA. In Prochlorococcus marinus (strain NATL1A), this protein is Large ribosomal subunit protein uL15.